The following is a 357-amino-acid chain: Uroporphyrinogen decarboxylase (357 aa).

Substrate contacts are provided by residues 27-31, Asp77, Tyr154, Thr209, and His327; that span reads RQAGR.

It belongs to the uroporphyrinogen decarboxylase family. As to quaternary structure, homodimer.

It is found in the cytoplasm. The enzyme catalyses uroporphyrinogen III + 4 H(+) = coproporphyrinogen III + 4 CO2. Its pathway is porphyrin-containing compound metabolism; protoporphyrin-IX biosynthesis; coproporphyrinogen-III from 5-aminolevulinate: step 4/4. Its function is as follows. Catalyzes the decarboxylation of four acetate groups of uroporphyrinogen-III to yield coproporphyrinogen-III. The polypeptide is Uroporphyrinogen decarboxylase (Proteus mirabilis (strain HI4320)).